The sequence spans 447 residues: Argininosuccinate synthase (447 aa).

Residues 17–25 and A43 contribute to the ATP site; that span reads AFSGGLDTS. Y99 lines the L-citrulline pocket. ATP-binding residues include G129 and T131. L-aspartate is bound by residues T131, N135, and D136. Residue N135 coordinates L-citrulline. D136 contacts ATP. Positions 139 and 192 each coordinate L-citrulline. Residue D194 coordinates ATP. L-citrulline-binding residues include T201, E203, and E280.

It belongs to the argininosuccinate synthase family. Type 2 subfamily. In terms of assembly, homotetramer.

It is found in the cytoplasm. It catalyses the reaction L-citrulline + L-aspartate + ATP = 2-(N(omega)-L-arginino)succinate + AMP + diphosphate + H(+). Its pathway is amino-acid biosynthesis; L-arginine biosynthesis; L-arginine from L-ornithine and carbamoyl phosphate: step 2/3. This Klebsiella pneumoniae subsp. pneumoniae (strain ATCC 700721 / MGH 78578) protein is Argininosuccinate synthase.